A 968-amino-acid polypeptide reads, in one-letter code: Isoleucine--tRNA ligase (968 aa).

Residues 68–78 (PYANGALHMGH) carry the 'HIGH' region motif. An L-isoleucyl-5'-AMP-binding site is contributed by Glu582. The 'KMSKS' region motif lies at 623–627 (KMSKS). Lys626 serves as a coordination point for ATP. Zn(2+) contacts are provided by Cys936, Cys939, Cys956, and Cys959.

This sequence belongs to the class-I aminoacyl-tRNA synthetase family. IleS type 1 subfamily. Monomer. Zn(2+) is required as a cofactor.

It localises to the cytoplasm. It catalyses the reaction tRNA(Ile) + L-isoleucine + ATP = L-isoleucyl-tRNA(Ile) + AMP + diphosphate. Functionally, catalyzes the attachment of isoleucine to tRNA(Ile). As IleRS can inadvertently accommodate and process structurally similar amino acids such as valine, to avoid such errors it has two additional distinct tRNA(Ile)-dependent editing activities. One activity is designated as 'pretransfer' editing and involves the hydrolysis of activated Val-AMP. The other activity is designated 'posttransfer' editing and involves deacylation of mischarged Val-tRNA(Ile). The sequence is that of Isoleucine--tRNA ligase from Prochlorococcus marinus (strain MIT 9312).